The following is a 520-amino-acid chain: Acetyltransferase MAT1 (520 aa).

Residues His183 and Asp456 each act as proton acceptor in the active site.

It belongs to the plant acyltransferase family.

Its pathway is secondary metabolite biosynthesis. In terms of biological role, acyl-CoA-dependent acyltransferase; part of the gene cluster that mediates the biosynthesis of mannosylerythritol lipids (MELs), surface-active substances that enhance the availability of water-insoluble substrates. Depending on the number of acetyl groups, mannosylerythritol lipids can be differentiated into MEL A (fully acetylated), MEL B and MEL C (monoacetylated at R-6 and R-4, respectively), and the fully deacetylated MEL D. The first step in the pathway is the generation of mannosylerythritol by the glycosyltransferase EMT1 which catalyzes the transfer of GDP-mannose to the C-4 atom of meso-erythritol. This reaction has to be stereospecific, since only mannosyl-D-erythritol is generated. The produced disaccharide is subsequently acylated with fatty acids of various lengths by the acyltransferases MAC1 and MAC2 at positions C-2 and C-3, repectively. The existence of MEL derivatives which carry an acetyl group at C-2 implies that at least MAC1 also accepts acetyl-CoA as a donor. The final step of MEL biosynthesis is the acetylation of the fully acylated mannosylerythritol lipids catalyzed by the acetyl-CoA-dependent acetyltransferase MAT1. MAT1 displays a relaxed regioselectivity and is able to transfer acetylgroups to both positions C-4 and C-6 of the mannosyl moiety. The chain is Acetyltransferase MAT1 from Pseudozyma antarctica (strain T-34) (Yeast).